Reading from the N-terminus, the 594-residue chain is UvrABC system protein C (594 aa).

One can recognise a GIY-YIG domain in the interval asparagine 13–isoleucine 99. Residues aspartate 205–isoleucine 240 enclose the UVR domain.

This sequence belongs to the UvrC family. As to quaternary structure, interacts with UvrB in an incision complex.

It is found in the cytoplasm. The UvrABC repair system catalyzes the recognition and processing of DNA lesions. UvrC both incises the 5' and 3' sides of the lesion. The N-terminal half is responsible for the 3' incision and the C-terminal half is responsible for the 5' incision. The polypeptide is UvrABC system protein C (Helicobacter acinonychis (strain Sheeba)).